Reading from the N-terminus, the 3232-residue chain is D-lysergyl-peptide-synthetase subunit 1 (3232 aa).

The interval 90 to 474 (GCLTYDEMSI…LGRKDDQVKI (385 aa)) is adenylation (A) domain 1. One can recognise a Carrier 1 domain in the interval 617-686 (REKLLQGCFA…TLREIVIVST (70 aa)). O-(pantetheine 4'-phosphoryl)serine is present on Ser649. The condensation (C) domain 1 stretch occupies residues 731-1122 (EDIYPCTHLQ…EHILTQIHSN (392 aa)). Residues 1165 to 1572 (QAKCQAQPDA…RRKDAQVKIR (408 aa)) are adenylation (A) domain 2. Residues 1717–1785 (TEHEISAIWA…TIRKLALARG (69 aa)) enclose the Carrier 2 domain. Residue Ser1749 is modified to O-(pantetheine 4'-phosphoryl)serine. Residues 1835–2252 (ERIYPCSPIQ…ALPVLDEDQM (418 aa)) are condensation (C) domain 2. The adenylation (A) domain 3 stretch occupies residues 2276–2675 (QQCLRCPDSP…GRNDDQVKVR (400 aa)). In terms of domain architecture, Carrier 3 spans 2810-2878 (MEAELQRLVG…RVSDLARIVE (69 aa)). Ser2842 carries the post-translational modification O-(pantetheine 4'-phosphoryl)serine. The segment at 2943–3218 (LYFSKPVASE…LLHWLHQQHI (276 aa)) is cyclization (Cyc) domain.

The protein belongs to the NRP synthetase family.

The protein operates within alkaloid biosynthesis; ergot alkaloid biosynthesis. Functionally, D-lysergyl-peptide-synthetase subunit 1; part of the gene cluster that mediates the biosynthesis of fungal ergot alkaloid. DmaW catalyzes the first step of ergot alkaloid biosynthesis by condensing dimethylallyl diphosphate (DMAP) and tryptophan to form 4-dimethylallyl-L-tryptophan. The second step is catalyzed by the methyltransferase easF that methylates 4-dimethylallyl-L-tryptophan in the presence of S-adenosyl-L-methionine, resulting in the formation of 4-dimethylallyl-L-abrine. The catalase easC and the FAD-dependent oxidoreductase easE then transform 4-dimethylallyl-L-abrine to chanoclavine-I which is further oxidized by easD in the presence of NAD(+), resulting in the formation of chanoclavine-I aldehyde. Agroclavine dehydrogenase easG then mediates the conversion of chanoclavine-I aldehyde to agroclavine via a non-enzymatic adduct reaction: the substrate is an iminium intermediate that is formed spontaneously from chanoclavine-I aldehyde in the presence of glutathione. The presence of easA is not required to complete this reaction. Further conversion of agroclavine to paspalic acid is a two-step process involving oxidation of agroclavine to elymoclavine and of elymoclavine to paspalic acid, the second step being performed by the elymoclavine oxidase cloA. Paspalic acid is then further converted to D-lysergic acid. Ergopeptines are assembled from D-lysergic acid and three different amino acids by the D-lysergyl-peptide-synthetases composed each of a monomudular and a trimodular nonribosomal peptide synthetase subunit. LpsB and lpsC encode the monomodular subunits responsible for D-lysergic acid activation and incorporation into the ergopeptine backbone. LpsA1 and A2 subunits encode the trimodular nonribosomal peptide synthetase assembling the tripeptide portion of ergopeptines. LpsA1 is responsible for formation of the major ergopeptine, ergotamine, and lpsA2 for alpha-ergocryptine, the minor ergopeptine of the total alkaloid mixture elaborated by C.purpurea. D-lysergyl-tripeptides are assembled by the nonribosomal peptide synthetases and released as N-(D-lysergyl-aminoacyl)-lactams. Cyclolization of the D-lysergyl-tripeptides is performed by the Fe(2+)/2-ketoglutarate-dependent dioxygenase easH which introduces a hydroxyl group into N-(D-lysergyl-aminoacyl)-lactam at alpha-C of the aminoacyl residue followed by spontaneous condensation with the terminal lactam carbonyl group. The protein is D-lysergyl-peptide-synthetase subunit 1 of Claviceps purpurea (Ergot fungus).